The sequence spans 342 residues: Histidinol-phosphate aminotransferase 2 (342 aa).

Lys-206 is subject to N6-(pyridoxal phosphate)lysine.

This sequence belongs to the class-II pyridoxal-phosphate-dependent aminotransferase family. Histidinol-phosphate aminotransferase subfamily. Requires pyridoxal 5'-phosphate as cofactor.

It catalyses the reaction L-histidinol phosphate + 2-oxoglutarate = 3-(imidazol-4-yl)-2-oxopropyl phosphate + L-glutamate. It functions in the pathway amino-acid biosynthesis; L-histidine biosynthesis; L-histidine from 5-phospho-alpha-D-ribose 1-diphosphate: step 7/9. The chain is Histidinol-phosphate aminotransferase 2 (hisC2) from Archaeoglobus fulgidus (strain ATCC 49558 / DSM 4304 / JCM 9628 / NBRC 100126 / VC-16).